The chain runs to 899 residues: Tuberous sclerosis 1 protein homolog (899 aa).

Coiled-coil stretches lie at residues 540–706 (LSST…CVNI) and 737–847 (SDEQ…ELKN). Residues 874 to 899 (NDSLHPKVGPPRRQSTDTSRSTFRQY) form a disordered region. Polar residues predominate over residues 889–899 (TDTSRSTFRQY).

In terms of assembly, interacts with tsc2.

It localises to the cytoplasm. In terms of biological role, together with tsc2, required for uptake of various amino acids from the environment and for proper conjugation. Involved in induction of gene expression of permeases and genes required for meiosis upon nitrogen starvation. May act as a GTPase-activating protein (GAP) for the small GTPase rhb1. This chain is Tuberous sclerosis 1 protein homolog (tsc1), found in Schizosaccharomyces pombe (strain 972 / ATCC 24843) (Fission yeast).